The primary structure comprises 1944 residues: Anaphase-promoting complex subunit 1 (1944 aa).

Ser51 and Ser60 each carry phosphoserine. Phosphothreonine is present on Thr291. The disordered stretch occupies residues 312–343 (ESPVASPFQNYSSIHSQSRSTSSPSLHSRSPS). Phosphoserine occurs at positions 313, 341, 343, 355, 362, 373, and 377. The span at 323–343 (SSIHSQSRSTSSPSLHSRSPS) shows a compositional bias: low complexity. The interval 370–395 (NLSSHSQSPKRHSISHSPSGSFNDSF) is disordered. Residues 384–393 (SHSPSGSFND) show a composition bias toward polar residues. Thr537 bears the Phosphothreonine mark. Phosphoserine is present on residues Ser547 and Ser555. The residue at position 571 (Tyr571) is a Phosphotyrosine. A phosphoserine mark is found at Ser680, Ser686, and Ser688. The tract at residues 991-1014 (NLPRGKSVLSSEVSSGTEAEEEDD) is disordered. Positions 998-1007 (VLSSEVSSGT) are enriched in polar residues. PC repeat units follow at residues 1297-1325 (AAGL…PEQL), 1366-1404 (GATL…PEFL), 1467-1501 (GACL…YLSA), and 1520-1552 (LLSL…EMNY).

This sequence belongs to the APC1 family. The mammalian APC/C is composed at least of 14 distinct subunits ANAPC1, ANAPC2, CDC27/APC3, ANAPC4, ANAPC5, CDC16/APC6, ANAPC7, CDC23/APC8, ANAPC10, ANAPC11, CDC26/APC12, ANAPC13, ANAPC15 and ANAPC16 that assemble into a complex of at least 19 chains with a combined molecular mass of around 1.2 MDa; APC/C interacts with FZR1 and FBXO5. Post-translationally, phosphorylated. Phosphorylation on Ser-355 occurs specifically during mitosis. Abundantly expressed in proliferating fibroblasts, juvenile testis, adult brain and epididymis.

It participates in protein modification; protein ubiquitination. Functionally, component of the anaphase promoting complex/cyclosome (APC/C), a cell cycle-regulated E3 ubiquitin ligase that controls progression through mitosis and the G1 phase of the cell cycle. The APC/C complex acts by mediating ubiquitination and subsequent degradation of target proteins: it mainly mediates the formation of 'Lys-11'-linked polyubiquitin chains and, to a lower extent, the formation of 'Lys-48'- and 'Lys-63'-linked polyubiquitin chains. The APC/C complex catalyzes assembly of branched 'Lys-11'-/'Lys-48'-linked branched ubiquitin chains on target proteins. This is Anaphase-promoting complex subunit 1 (Anapc1) from Mus musculus (Mouse).